We begin with the raw amino-acid sequence, 572 residues long: MPTLYVILSLLLGLIGGVLVQRAIGSRQQAVTDDRLQREAQAEAQQIRAEAQRHARELHEAAEQDRQDAISKTQDAARRVQDAAERDTLAAAHEARLDEQREQVRALRAQLEAEREQAKADAAQQREALSTDRQETRREREDLGREIERLGRRTEQLDARSDKLDALEERLEGGWREVQRQEQEVAERLRQADLKLYEVAGLTPEVAREQILGRLNAELEEEKAIRVKAMTEKAGAEARRSARSIIAQAIQRSASETSAQLSVSVVPIPSDAMKGRLIGREGRNIRAFESLTGVDLIIDDTPEAVILSSFNPLRREVARHVLDALVADGRIHPTRIEEMVHKAQDDMKTFIHQQGEEAAIEAGVVGLKPGLVQLLGRMYFRTSYSQNVLKHSVQVAHLTGIMADELGLDAALARRAGLMHDVGKSIDREIEGTHVEIGINLARRFGEPAEVIDAIAHHHDPENGETLYSVLVAAADAISAARPGARREALESYVRRLEQLEQIAVAFPGVQQAYAIQAGREVRVIVQPEKVTDAQATLLARDIAGRVEQDMEYPGQVQVTVVRESRAVGVAR.

A helical membrane pass occupies residues M1–Q21. 2 disordered regions span residues H59–E85 and Q110–D142. 2 stretches are compositionally biased toward basic and acidic residues: residues Q110–K119 and L129–D142. The KH domain occupies S262–L322. Residues V388–A481 form the HD domain.

The protein belongs to the RNase Y family.

Its subcellular location is the cell membrane. Its function is as follows. Endoribonuclease that initiates mRNA decay. The protein is Ribonuclease Y of Deinococcus radiodurans (strain ATCC 13939 / DSM 20539 / JCM 16871 / CCUG 27074 / LMG 4051 / NBRC 15346 / NCIMB 9279 / VKM B-1422 / R1).